The following is a 122-amino-acid chain: Secreted RxLR effector protein RXLR-C251 (122 aa).

A signal peptide spans 1 to 24; it reads MRFFYKLALMTTVASLACSDTALA. The RxLR motif lies at 48–51; sequence RSLR.

The protein belongs to the RxLR effector family.

It is found in the secreted. Its subcellular location is the host cytoplasm. The protein localises to the host nucleus. Secreted effector that does not suppress pattern-triggered immunity (PTI) in plant host. This chain is Secreted RxLR effector protein RXLR-C251, found in Plasmopara halstedii (Downy mildew of sunflower).